The following is a 238-amino-acid chain: Oxidoreductase dmxR7 (238 aa).

The protein belongs to the avfA family.

It functions in the pathway secondary metabolite biosynthesis. Functionally, oxidoreductase; part of the gene cluster that mediates the biosynthesis of the dimeric xanthones cryptosporioptides. The pathway begins with the synthesis of atrochrysone thioester by the polyketide synthase dmx-nrPKS. The atrochrysone carboxyl ACP thioesterase dmxR1 then breaks the thioester bond and releases the atrochrysone carboxylic acid from dmx-nrPKS. Atrochrysone carboxylic acid is decarboxylated by the decarboxylase dmxR15, and oxidized by the anthrone oxygenase dmxR16 to yield emodin. Emodin is then reduced to emodin hydroquinone by the oxidoreductase dmxR7. A-ring reduction by the short chain dehydrogenase dmxR18, dehydration by the scytalone dehydratase-like protein dmxR17 and probable spontaneous re-oxidation, results in overall deoxygenation to chrysophanol. Baeyer-Villiger oxidation by the Baeyer-Villiger monooxygenase (BVMO) dmxR6 then yields monodictylactone in equilibrium with monodictyphenone. In the case of the cryptosporioptides biosynthesis, monodictylactone is reduced at C-12 to an alcohol (by the short chain dehydrogenases dmxR12 or dmxR8) and hydroxylated at C-5 by dmxR9, yielding the electron-rich aromatic which could eliminate H(2)O to form the ortho-quinonemethide, followed by tautomerisation to paraquinone and complete the formal reduction to produce the 10-methylgroup. Conjugate addition of C-4a-OH to the resulting paraquinone by the monooxygenase dmxR10 then gives cyclohexadienone, which is then reduced at C-5 by the short chain dehydrogenase dmxR3 to give the dihydroxanthone. The 6,7-epoxide in the cryptosporioptides could be introduced by the cytochrome P450 monooxygenase dmxL3. The highly reducing PKS dmxL2 manufactures butyrate, which is further carboxylated by dmxL1 to form ethylmalonate. It is not yet clear whether the carboxylation occurs while the butyrate is attached to the ACP of dmxL2, but this unusual fungal metabolite could then be esterified to O-5 by the O-acetyltransferase dmxR13. Finally, dimerization performed by dmxR5 gives the observed dimers cryptosporioptides A, B and C as the final products of the pathway. The polypeptide is Oxidoreductase dmxR7 (Cryptosporiopsis sp. (strain 8999)).